The following is a 236-amino-acid chain: H2HPP isomerase (236 aa).

Cupin type-1 domains follow at residues 40–106 (YVPP…AIDI) and 151–215 (NIPG…SKSV). Positions 50, 52, 56, 91, 162, 164, 168, and 202 each coordinate a divalent metal cation. Tyr223 is a binding site for substrate.

In terms of assembly, monomer. Requires Fe(2+) as cofactor. Co(2+) is required as a cofactor.

The protein localises to the cytoplasm. The catalysed reaction is 3-[(4R)-4-hydroxycyclohexa-1,5-dien-1-yl]-2-oxopropanoate = 3-[(1E,4R)-4-hydroxycyclohex-2-en-1-ylidene]pyruvate. It functions in the pathway antibiotic biosynthesis; bacilysin biosynthesis. Part of the bacABCDEF operon responsible for the biosynthesis of the nonribosomally synthesized dipeptide antibiotic bacilysin, composed of L-alanine and L-anticapsin. Bacilysin is an irreversible inactivator of the glutaminase domain of glucosamine synthetase. BacB catalyzes the allylic isomerization of the endocyclic-delta(4),delta(8)-7R-dihydro-hydroxyphenylpyruvate (en-H2HPP) to generate a mixture of 3E,7R- and 3Z, 7R-olefins of the exocyclic-delta(3),delta(5)-dihydro-hydroxyphenylpyruvate (ex-H2HPP). This chain is H2HPP isomerase, found in Bacillus subtilis.